The sequence spans 275 residues: Diaminopimelate epimerase (275 aa).

Substrate contacts are provided by Asn12, Gln45, and Asn65. Cys74 (proton donor) is an active-site residue. Substrate-binding positions include 75 to 76 (GN), Asn158, Asn191, and 209 to 210 (ER). The active-site Proton acceptor is Cys218. Position 219 to 220 (219 to 220 (GS)) interacts with substrate.

This sequence belongs to the diaminopimelate epimerase family. Homodimer.

The protein localises to the cytoplasm. It catalyses the reaction (2S,6S)-2,6-diaminopimelate = meso-2,6-diaminopimelate. It participates in amino-acid biosynthesis; L-lysine biosynthesis via DAP pathway; DL-2,6-diaminopimelate from LL-2,6-diaminopimelate: step 1/1. Functionally, catalyzes the stereoinversion of LL-2,6-diaminopimelate (L,L-DAP) to meso-diaminopimelate (meso-DAP), a precursor of L-lysine and an essential component of the bacterial peptidoglycan. The polypeptide is Diaminopimelate epimerase (Shewanella amazonensis (strain ATCC BAA-1098 / SB2B)).